Reading from the N-terminus, the 517-residue chain is Crotonobetaine/carnitine--CoA ligase (517 aa).

It belongs to the ATP-dependent AMP-binding enzyme family.

It carries out the reaction 4-(trimethylamino)butanoate + ATP + CoA = 4-(trimethylamino)butanoyl-CoA + AMP + diphosphate. It catalyses the reaction crotonobetaine + ATP + CoA = crotonobetainyl-CoA + AMP + diphosphate. The enzyme catalyses (R)-carnitine + ATP + CoA = (R)-carnitinyl-CoA + AMP + diphosphate. The protein operates within amine and polyamine metabolism; carnitine metabolism. Catalyzes the transfer of CoA to carnitine, generating the initial carnitinyl-CoA needed for the CaiB reaction cycle. Also has activity toward crotonobetaine and gamma-butyrobetaine. This Salmonella typhi protein is Crotonobetaine/carnitine--CoA ligase.